The sequence spans 622 residues: Pyranose 2-oxidase (622 aa).

An N-terminal signal peptide occupies residues 1–28; that stretch reads MSASSSDPFHSFAKTSFTSKAAKRATAH. A propeptide spanning residues 29-37 is cleaved from the precursor; that stretch reads SLPPLPGPG. At H167 the chain carries Tele-8alpha-FAD histidine. Residues Q449 and H451 each contribute to the substrate site. The active-site Proton acceptor is the H546. N591 is an active-site residue.

The protein belongs to the GMC oxidoreductase family. Homotetramer. FAD serves as cofactor. Not glycosylated.

Its subcellular location is the periplasm. It catalyses the reaction D-glucose + O2 = 2-dehydro-D-glucose + H2O2. Its function is as follows. Catalyzes the oxidation of various aldopyranoses and disaccharides on carbon-2 to the corresponding 2-keto sugars concomitant with the reduction of O(2) to H(2)O(2). Plays an important role in lignin degradation of wood rot fungi by supplying the essential cosubstrate H(2)O(2) for the ligninolytic peroxidases, lignin peroxidase and manganese-dependent peroxidase. The preferred substrate is D-glucose which is converted to 2-dehydro-D-glucose, an intermediate of a secondary metabolic pathway leading to the antibiotic cortalcerone. Also acts on D-xylose, together with D-glucose the major sugars derived from wood, on L-sorbose, D-galactose and 1,5-anhydroglucitol, a diagnostic marker of diabetes mellitus. This chain is Pyranose 2-oxidase (p2ox), found in Phlebiopsis gigantea (White-rot fungus).